A 327-amino-acid polypeptide reads, in one-letter code: Mitochondrial thiamine pyrophosphate carrier 1 (327 aa).

Solcar repeat units lie at residues 13 to 114 (GSKL…AAQL), 126 to 214 (PAAA…LRAP), and 222 to 317 (FWGG…VLRA). The next 6 membrane-spanning stretches (helical) occupy residues 16 to 36 (LQVV…IAPL), 95 to 111 (LLYI…YRSA), 132 to 152 (FVAG…LDLL), 189 to 209 (GIGP…AAYE), 223 to 245 (WGGQ…VFPL), and 292 to 309 (GLTV…VTMW).

It belongs to the mitochondrial carrier (TC 2.A.29) family.

It localises to the mitochondrion inner membrane. Its function is as follows. Mitochondrial transporter that mediates uptake of thiamine pyrophosphate (ThPP) into mitochondria. The sequence is that of Mitochondrial thiamine pyrophosphate carrier 1 (TPC1) from Pyricularia oryzae (strain 70-15 / ATCC MYA-4617 / FGSC 8958) (Rice blast fungus).